The chain runs to 142 residues: Small ribosomal subunit protein uS12 (142 aa).

The interval 1 to 44 is disordered; sequence MANGKYAARKLKKDRQKHRWSDTDYARRERGLGKKSDPLEGAPQ. Over residues 7-18 the composition is skewed to basic residues; it reads AARKLKKDRQKH. Residues 19-38 show a composition bias toward basic and acidic residues; the sequence is RWSDTDYARRERGLGKKSDP.

Belongs to the universal ribosomal protein uS12 family. Part of the 30S ribosomal subunit.

Functionally, with S4 and S5 plays an important role in translational accuracy. Located at the interface of the 30S and 50S subunits. The sequence is that of Small ribosomal subunit protein uS12 from Haloarcula marismortui (strain ATCC 43049 / DSM 3752 / JCM 8966 / VKM B-1809) (Halobacterium marismortui).